Reading from the N-terminus, the 1191-residue chain is Homeodomain-interacting protein kinase 3 (1191 aa).

A Glycyl lysine isopeptide (Lys-Gly) (interchain with G-Cter in SUMO2) cross-link involves residue Lys-27. The 329-residue stretch at 197–525 (YEVLDFLGRG…PIETLNHPFV (329 aa)) folds into the Protein kinase domain. Residues 203–211 (LGRGTFGQV) and Lys-226 each bind ATP. Asp-322 serves as the catalytic Proton acceptor. Phosphotyrosine is present on Tyr-359. The interaction with AR stretch occupies residues 766–920 (QNRSNSLQNT…NSMSDDEQES (155 aa)). The segment at 774–867 (NTNVPHSAFI…SPRPSLRECK (94 aa)) is interaction with FAS. A disordered region spans residues 801–828 (TQDNHTSEGEARTCHEASVRQDSSVSDK). The span at 802–828 (QDNHTSEGEARTCHEASVRQDSSVSDK) shows a compositional bias: basic and acidic residues. An interaction with UBL1 region spans residues 846–856 (ITISSDTDDEE). Over residues 888–905 (SSPDSTLSTSSSGQSSPS) the composition is skewed to low complexity. 2 disordered regions span residues 888–960 (SSPD…TCAG) and 993–1022 (TCQP…KPTS). The segment covering 1008–1022 (NQPSASAARQQKPTS) has biased composition (polar residues).

This sequence belongs to the protein kinase superfamily. CMGC Ser/Thr protein kinase family. HIPK subfamily. In terms of assembly, interacts with Nkx1-2. Interacts with FAS and DAXX. Probably part of a complex consisting of HIPK3, FAS and FADD. Interacts with UBL1/SUMO-1. Interacts with and stabilizes ligand-bound androgen receptor (AR). Autophosphorylated. Autophosphorylation is not required for catalytic activity. Post-translationally, may be sumoylated.

Its subcellular location is the nucleus. The catalysed reaction is L-seryl-[protein] + ATP = O-phospho-L-seryl-[protein] + ADP + H(+). The enzyme catalyses L-threonyl-[protein] + ATP = O-phospho-L-threonyl-[protein] + ADP + H(+). Functionally, seems to negatively regulate apoptosis by promoting FADD phosphorylation. Enhances androgen receptor-mediated transcription. May act as a transcriptional corepressor for NK homeodomain transcription factors. This chain is Homeodomain-interacting protein kinase 3 (Hipk3), found in Rattus norvegicus (Rat).